The chain runs to 86 residues: Kappa-theraphotoxin-Cg1a 1 (86 aa).

Residues Met1–Ala21 form the signal peptide. Residues Ala22–Arg50 constitute a propeptide that is removed on maturation. 3 cysteine pairs are disulfide-bonded: Cys52-Cys66, Cys59-Cys71, and Cys65-Cys78. An involved in active face region spans residues Met55–Phe56. Phe84 bears the Phenylalanine amide mark.

It belongs to the neurotoxin 10 (Hwtx-1) family. 28 (Jztx-11) subfamily. As to expression, expressed by the venom gland.

Its subcellular location is the secreted. In terms of biological role, this toxin acts as a voltage-dependent gating-modifier. It inhibits the sodium conductance (IC(50)=124 nM) and slows the fast inactivation (EC(50)=1180 nM) of Nav1.5/SCN5A. It significantly shifts the activation to more depolarized voltages and decreases the deactivation of Nav1.5 currents upon extreme depolarization, but only slightly affects voltage-dependence of steady-state inactivation. In addition, this toxin causes an approximately five-fold decrease in the rate of recovery from inactivation and an approximately 1.9-fold reduction in the closed-state inactivation rate. This toxin integrates the functions of site 3 toxins (alpha-scorpion toxins) with site 4 toxins (beta-scorpion and spider toxins) by targeting multiple sites on Nav1.5. Also shows inhibition of voltage-gated potassium channels (5 uM completely inhibits Kv2.1/KCNB1, whereas 5 uM moderately inhibits Kv4.2/KCND2 Kv4.1/KCND1 channels). The polypeptide is Kappa-theraphotoxin-Cg1a 1 (Chilobrachys guangxiensis (Chinese earth tiger tarantula)).